We begin with the raw amino-acid sequence, 338 residues long: Formamidase (338 aa).

Residues 14–260 (LLIAAIQYPV…WEIVTAELFP (247 aa)) enclose the CN hydrolase domain. Glutamate 60 acts as the Proton acceptor in catalysis. Lysine 133 acts as the Proton donor in catalysis. The Nucleophile role is filled by cysteine 166.

It belongs to the carbon-nitrogen hydrolase superfamily. Aliphatic amidase family.

It catalyses the reaction formamide + H2O = formate + NH4(+). In terms of biological role, is an aliphatic amidase with a restricted substrate specificity, as it only hydrolyzes formamide. This chain is Formamidase, found in Photorhabdus laumondii subsp. laumondii (strain DSM 15139 / CIP 105565 / TT01) (Photorhabdus luminescens subsp. laumondii).